Here is a 390-residue protein sequence, read N- to C-terminus: Glucose-fructose oxidoreductase domain-containing protein 1 (390 aa).

The signal sequence occupies residues 1-21 (MLPGVGVFGTSLTSRVIIPLL). N-linked (GlcNAc...) asparagine glycosylation is found at N161, N270, and N354.

The protein belongs to the Gfo/Idh/MocA family. Homodimer.

The protein localises to the secreted. Its function is as follows. Probably catalytically inactive enzyme. Does not bind NAD or NADP. This chain is Glucose-fructose oxidoreductase domain-containing protein 1 (gfod1), found in Xenopus tropicalis (Western clawed frog).